A 1189-amino-acid chain; its full sequence is MTAPQTDDVVTGRIAAIWAGLLDRPEIGIDDNVFRLGASSVMAVRAAARIREALDTPLPLRDVFESPSPAALAKRIRASRSTAPTASGPPRTAPVDSTATAPLTFQQEPMWLFDRMQPGNATYTIHFALRHEGHLDLGVLDRCVRDVVRRHAVLRTVFPSVDDRPAQQVLDRAHIPLGESDLRALPEAERPVAAARIAAREAQAPFDLSTGPMLRVRVLHLSDTRQRLLLTMPHIVTDAWSDDILVRELNHLYRAHTDGIAPALPPLPVQYHDWAARQRAELAGTEAELLDWWRHHLAGVPPLLELPADRPRAAVKRHRGGRLLFDIPESVTRRLEGLAKDEGTTPYAVLLAGFAALLHRLTGQDDLLVGSPVAGRTHTETEGLVGLFVNTVAVRCDVAGRPSFLELVRRTRRTVVESFARQELPFHRLVEELAPVRSPAYTPLVQVMLALQNTPDRDGREPGEGPFAREESGGDTGSAMFDLTLFVTGSASGMRGEWEYDSDLFDRERVAELGPQLVTLLDAALDRTDLPVALLPLQEPAARDRMVQAWNDTADVLPGGPDADSLPALLSAQAHRTPDAVALRTDDGAELTYRQLHLRADRLARRLLSYGLAPESVVAVACERSFEMVVALLAVLKAGCAYLPIDPGDPAERTAYLLRDSGARVLLTLHRHTANLPDADGTTVVTLDEPDPSGDMQDTTSALPGIAPGQLAYLIYTSGSTGRPKGVLNEHGPVCNRIRWGMRAFPPGPGTIVLQKTPIHFDVSVWEMFWTLATGATLVLARPDGHRDPQYLAGRLVEEGVTDVHFVPSMLAAFLDVGALPEGHSLRRVFCSGEALSPGLRDRLFARLPHVELHNLYGPTEAAIEVTHWRCRPGEPTVPIGRPIANARCYVLDAELNPVPPGVPGELWLGGVPVARGYHGRADLTAERFLPDPYGPAGSRMYRSGDLARWRRDGVLEYLGREDGQVKLRGQRLELGEIEATLAGHAEVADVVVDVRGTGPQDRRLVAYVRPARPGRDEQLRTTLRELAAARLPAYMRPSSYVTLDRVPLTPSGKTDRKALPDPAAGEQPRSGRGAAPGTPAERELAGIWAELLGAGEVGGDDNFFEIGGHSLLAARMTGRASTAFGVDLPVSLAFEHPVLRDFALAVVTAQAATDSAATERLLAELEALADTELEALPDEDGPDGRSGE.

A Carrier 1 domain is found at 5-80; sequence QTDDVVTGRI…ALAKRIRASR (76 aa). Ser-40 is subject to O-(pantetheine 4'-phosphoryl)serine. 2 disordered regions span residues 75–97 and 454–476; these read RIRASRSTAPTASGPPRTAPVDS and TPDRDGREPGEGPFAREESGGDT. Positions 100-541 are condensation; the sequence is TAPLTFQQEP…VALLPLQEPA (442 aa). A compositionally biased stretch (basic and acidic residues) spans 455 to 472; the sequence is PDRDGREPGEGPFAREES. The interval 572–969 is adenylation; it reads AQAHRTPDAV…GREDGQVKLR (398 aa). The tract at residues 1045–1081 is disordered; sequence DRVPLTPSGKTDRKALPDPAAGEQPRSGRGAAPGTPA. One can recognise a Carrier 2 domain in the interval 1076–1151; that stretch reads APGTPAEREL…DFALAVVTAQ (76 aa). Ser-1111 carries the O-(pantetheine 4'-phosphoryl)serine modification.

Belongs to the NRP synthetase family. Pantetheine 4'-phosphate is required as a cofactor.

It catalyses the reaction holo-[peptidyl-carrier protein] + L-alanine + ATP = L-alanyl-[peptidyl-carrier protein] + AMP + diphosphate. It functions in the pathway secondary metabolite biosynthesis; bialaphos biosynthesis. In terms of biological role, involved in the biosynthesis of phosphinothricin tripeptide (PTT), also known as bialaphos (BA), a natural-product antibiotic and potent herbicide. Adenylates L-alanine and loads it onto a peptidyl carrier domain via a thioester linkage to the phosphopanthetheine moiety. Shows weaker activity with aminobutyric acid and L-serine. In Streptomyces viridochromogenes (strain DSM 40736 / JCM 4977 / BCRC 1201 / Tue 494), this protein is Phosphinothricin tripeptide synthetase PhsB.